The primary structure comprises 66 residues: Large ribosomal subunit protein bL31 (66 aa).

Zn(2+)-binding residues include Cys-16, Cys-18, Cys-36, and Cys-39.

This sequence belongs to the bacterial ribosomal protein bL31 family. Type A subfamily. As to quaternary structure, part of the 50S ribosomal subunit. Zn(2+) serves as cofactor.

Functionally, binds the 23S rRNA. In Clostridioides difficile (strain 630) (Peptoclostridium difficile), this protein is Large ribosomal subunit protein bL31.